The chain runs to 131 residues: PDZ domain-containing protein C52A11.3 (131 aa).

The region spanning 51–127 is the PDZ domain; the sequence is LVKLQKDANR…RLYLQIARPH (77 aa).

This Caenorhabditis elegans protein is PDZ domain-containing protein C52A11.3.